The sequence spans 75 residues: Small ribosomal subunit protein bS18 (75 aa).

Belongs to the bacterial ribosomal protein bS18 family. As to quaternary structure, part of the 30S ribosomal subunit. Forms a tight heterodimer with protein bS6.

Binds as a heterodimer with protein bS6 to the central domain of the 16S rRNA, where it helps stabilize the platform of the 30S subunit. The chain is Small ribosomal subunit protein bS18 from Sodalis glossinidius (strain morsitans).